A 122-amino-acid chain; its full sequence is Large ribosomal subunit protein uL14 (122 aa).

This sequence belongs to the universal ribosomal protein uL14 family. Part of the 50S ribosomal subunit. Forms a cluster with proteins L3 and L19. In the 70S ribosome, L14 and L19 interact and together make contacts with the 16S rRNA in bridges B5 and B8.

Its function is as follows. Binds to 23S rRNA. Forms part of two intersubunit bridges in the 70S ribosome. In Chlorobium phaeobacteroides (strain BS1), this protein is Large ribosomal subunit protein uL14.